The sequence spans 170 residues: Photosystem II extrinsic protein V (170 aa).

Positions 1 to 33 (MASFFSTLRRSLNRLLIALPVLLGLMISTPAQA) are cleaved as a signal peptide. C70, C73, H74, and H125 together coordinate heme c.

Belongs to the cytochrome c family. PsbV subfamily. In terms of assembly, PSII is composed of 1 copy each of membrane proteins PsbA, PsbB, PsbC, PsbD, PsbE, PsbF, PsbH, PsbI, PsbJ, PsbK, PsbL, PsbM, PsbT, PsbX, PsbY, PsbZ, Psb30/Ycf12, peripheral proteins PsbO, CyanoQ (PsbQ), PsbU, PsbV and a large number of cofactors. It forms dimeric complexes. Heme c serves as cofactor.

It localises to the cellular thylakoid membrane. Its function is as follows. One of the extrinsic, lumenal subunits of photosystem II (PSII). PSII is a light-driven water plastoquinone oxidoreductase, using light energy to abstract electrons from H(2)O, generating a proton gradient subsequently used for ATP formation. The extrinsic proteins stabilize the structure of photosystem II oxygen-evolving complex (OEC), the ion environment of oxygen evolution and protect the OEC against heat-induced inactivation. Low-potential cytochrome c that plays a role in the OEC of PSII. The sequence is that of Photosystem II extrinsic protein V from Synechococcus sp. (strain CC9311).